Reading from the N-terminus, the 542-residue chain is CTP synthase (542 aa).

Residues 1-265 (MARYVFITGG…DSEVLSAFGI (265 aa)) are amidoligase domain. Ser13 is a binding site for CTP. UTP is bound at residue Ser13. Position 14-19 (14-19 (SLGKGI)) interacts with ATP. Position 54 (Tyr54) interacts with L-glutamine. Asp71 contacts ATP. Residues Asp71 and Glu139 each contribute to the Mg(2+) site. Residues 146 to 148 (DIE), 186 to 191 (KTKPTQ), and Lys222 each bind CTP. UTP contacts are provided by residues 186 to 191 (KTKPTQ) and Lys222. In terms of domain architecture, Glutamine amidotransferase type-1 spans 291–541 (TIAVVGKYTG…IEAAIEQSRL (251 aa)). Residue Gly353 participates in L-glutamine binding. Cys380 functions as the Nucleophile; for glutamine hydrolysis in the catalytic mechanism. Residues 381–384 (FGMQ), Glu404, and Arg469 contribute to the L-glutamine site. Residues His514 and Glu516 contribute to the active site.

The protein belongs to the CTP synthase family. In terms of assembly, homotetramer.

The catalysed reaction is UTP + L-glutamine + ATP + H2O = CTP + L-glutamate + ADP + phosphate + 2 H(+). The enzyme catalyses L-glutamine + H2O = L-glutamate + NH4(+). It carries out the reaction UTP + NH4(+) + ATP = CTP + ADP + phosphate + 2 H(+). It functions in the pathway pyrimidine metabolism; CTP biosynthesis via de novo pathway; CTP from UDP: step 2/2. With respect to regulation, allosterically activated by GTP, when glutamine is the substrate; GTP has no effect on the reaction when ammonia is the substrate. The allosteric effector GTP functions by stabilizing the protein conformation that binds the tetrahedral intermediate(s) formed during glutamine hydrolysis. Inhibited by the product CTP, via allosteric rather than competitive inhibition. Its function is as follows. Catalyzes the ATP-dependent amination of UTP to CTP with either L-glutamine or ammonia as the source of nitrogen. Regulates intracellular CTP levels through interactions with the four ribonucleotide triphosphates. This is CTP synthase from Brucella canis (strain ATCC 23365 / NCTC 10854 / RM-666).